The following is a 203-amino-acid chain: dITP/XTP pyrophosphatase (203 aa).

Residue 7–12 (SGNLHK) participates in substrate binding. Positions 47 and 77 each coordinate Mg(2+). The Proton acceptor role is filled by aspartate 77. Substrate is bound by residues serine 78, 160–163 (FGYD), lysine 183, and 188–189 (HR).

It belongs to the HAM1 NTPase family. As to quaternary structure, homodimer. It depends on Mg(2+) as a cofactor.

The catalysed reaction is XTP + H2O = XMP + diphosphate + H(+). It catalyses the reaction dITP + H2O = dIMP + diphosphate + H(+). It carries out the reaction ITP + H2O = IMP + diphosphate + H(+). Pyrophosphatase that catalyzes the hydrolysis of nucleoside triphosphates to their monophosphate derivatives, with a high preference for the non-canonical purine nucleotides XTP (xanthosine triphosphate), dITP (deoxyinosine triphosphate) and ITP. Seems to function as a house-cleaning enzyme that removes non-canonical purine nucleotides from the nucleotide pool, thus preventing their incorporation into DNA/RNA and avoiding chromosomal lesions. The sequence is that of dITP/XTP pyrophosphatase from Opitutus terrae (strain DSM 11246 / JCM 15787 / PB90-1).